Consider the following 354-residue polypeptide: UPF0324 membrane protein BL1094 (354 aa).

The next 10 helical transmembrane spans lie at 12–33, 43–65, 86–108, 112–129, 138–160, 175–197, 239–256, 271–293, 300–321, and 331–353; these read IATVDMLFIGVLTLLASLFASW, FGALIIALLIGMIIQFPIRSAYV, LLRLGIILLGFKLNLAVLFTQGI, PIAAVVVTLTIIVCYAIA, LAILTAGGTGICGAAAVMGLAGS, VTMAVAIVAIMGTVFALLEIALG, LSRVLMLVFAAIIIAIWW, VAFPWFMLGFIGASIIGTFVPFV, LVDFAYIVLGMAMAALGINVNF, and PMLASFLTSILLMCFAAGVAMLF.

The protein belongs to the UPF0324 family.

Its subcellular location is the cell membrane. In Bifidobacterium longum (strain NCC 2705), this protein is UPF0324 membrane protein BL1094.